We begin with the raw amino-acid sequence, 261 residues long: MVKIPKSHPRYWSLYYREKIIEGMEKGMTAKAGLIAHGRGEAFDYLIGERTIEPAERAMRAAVAKLLLAENPVVSVNGNVAALVPKETIELARALNAKLEINLFYRTEDRVKAIAEELRKYDPEIELLGINPTKRIPGLEHERGKVDENGIWKADVVVVPLEDGDRTEALVRMGKFVITIDLNPLSRSARMADITIVDNIVRAYPRMTELAREMKDYSRGELIRIIEEYDNGKTLNDVLLHIRDRLTKLAEGGIWRKKQLD.

ATP is bound by residues Arg17, Arg39, 181 to 182 (DL), 187 to 188 (RS), and 199 to 200 (NI).

The protein belongs to the archaeal phosphopantothenate synthetase family. As to quaternary structure, homodimer.

It catalyses the reaction (R)-4-phosphopantoate + beta-alanine + ATP = (R)-4'-phosphopantothenate + AMP + diphosphate + H(+). It functions in the pathway cofactor biosynthesis; coenzyme A biosynthesis. Its function is as follows. Catalyzes the condensation of (R)-4-phosphopantoate and beta-alanine to 4'-phosphopantothenate in the CoA biosynthesis pathway. The polypeptide is 4-phosphopantoate--beta-alanine ligase (Thermococcus onnurineus (strain NA1)).